The following is a 120-amino-acid chain: Large ribosomal subunit protein bL17 (120 aa).

This sequence belongs to the bacterial ribosomal protein bL17 family. In terms of assembly, part of the 50S ribosomal subunit. Contacts protein L32.

The polypeptide is Large ribosomal subunit protein bL17 (Desulforapulum autotrophicum (strain ATCC 43914 / DSM 3382 / VKM B-1955 / HRM2) (Desulfobacterium autotrophicum)).